The sequence spans 253 residues: MADHATLIDEANLETAAPGPAALETASAPLVRGKWLKNDMPRERLIEQGASVLSDTELIVLILGSGLPGHDVFDVARTLLDRFGSLRAMLDATYTDFADLRGIGPAKKTQLLAIMEMARRSLVDKMRMRSLINSPEAVENYLRLRIGGRPQEIFVSLFLDARHRLIRCEESAQGTLTRMAVYPREIVRRALSLNAASLIVAHNHPSGAVQPSASDCRLTHTLRDALTLIDVQLVDHLVIGTDSVYSFARAGWP.

Residues 131-253 form the MPN domain; it reads LINSPEAVEN…VYSFARAGWP (123 aa). Zn(2+) is bound by residues H202, H204, and D215. The JAMM motif signature appears at 202-215; sequence HNHPSGAVQPSASD.

The protein belongs to the UPF0758 family.

In Paraburkholderia xenovorans (strain LB400), this protein is UPF0758 protein Bxeno_A3578.